A 249-amino-acid polypeptide reads, in one-letter code: Ribitol 2-dehydrogenase (249 aa).

Position 20–43 (20–43) interacts with NAD(+); sequence TGAASGIGLECARTLLGAGAKVVL. Residue tyrosine 160 is the Proton acceptor of the active site.

Belongs to the short-chain dehydrogenases/reductases (SDR) family. Homotetramer.

It catalyses the reaction ribitol + NAD(+) = D-ribulose + NADH + H(+). In Klebsiella aerogenes (Enterobacter aerogenes), this protein is Ribitol 2-dehydrogenase (rbtD).